The following is a 99-amino-acid chain: Large ribosomal subunit protein eL21 (99 aa).

This sequence belongs to the eukaryotic ribosomal protein eL21 family.

The protein is Large ribosomal subunit protein eL21 of Staphylothermus marinus (strain ATCC 43588 / DSM 3639 / JCM 9404 / F1).